Reading from the N-terminus, the 578-residue chain is DNA primase (578 aa).

The segment at 40–64 (CPFHQEKTPSFTVNFEKQFYFCFGC) adopts a CHC2-type zinc-finger fold. The 83-residue stretch at 257–339 (KQILIVEGYV…GKNVKFIFLP (83 aa)) folds into the Toprim domain. Mg(2+)-binding residues include Glu263, Asp307, and Asp309.

Belongs to the DnaG primase family. In terms of assembly, monomer. Interacts with DnaB. The cofactor is Zn(2+). Mg(2+) is required as a cofactor.

It catalyses the reaction ssDNA + n NTP = ssDNA/pppN(pN)n-1 hybrid + (n-1) diphosphate.. RNA polymerase that catalyzes the synthesis of short RNA molecules used as primers for DNA polymerase during DNA replication. In Buchnera aphidicola subsp. Baizongia pistaciae (strain Bp), this protein is DNA primase.